A 337-amino-acid chain; its full sequence is Glyceraldehyde-3-phosphate dehydrogenase (337 aa).

Residues 17 to 18 (RI), D39, K83, and S125 each bind NAD(+). Residues 156–158 (SCT), T187, R202, 215–216 (TG), and R238 contribute to the D-glyceraldehyde 3-phosphate site. C157 acts as the Nucleophile in catalysis. N319 contacts NAD(+).

This sequence belongs to the glyceraldehyde-3-phosphate dehydrogenase family. As to quaternary structure, homotetramer.

The protein resides in the cytoplasm. The catalysed reaction is D-glyceraldehyde 3-phosphate + phosphate + NAD(+) = (2R)-3-phospho-glyceroyl phosphate + NADH + H(+). It participates in carbohydrate degradation; glycolysis; pyruvate from D-glyceraldehyde 3-phosphate: step 1/5. Functionally, catalyzes the oxidative phosphorylation of glyceraldehyde 3-phosphate (G3P) to 1,3-bisphosphoglycerate (BPG) using the cofactor NAD. The first reaction step involves the formation of a hemiacetal intermediate between G3P and a cysteine residue, and this hemiacetal intermediate is then oxidized to a thioester, with concomitant reduction of NAD to NADH. The reduced NADH is then exchanged with the second NAD, and the thioester is attacked by a nucleophilic inorganic phosphate to produce BPG. This chain is Glyceraldehyde-3-phosphate dehydrogenase (gapA), found in Mycoplasma pneumoniae (strain ATCC 29342 / M129 / Subtype 1) (Mycoplasmoides pneumoniae).